The chain runs to 922 residues: DNA gyrase subunit A (922 aa).

The segment covering 1–14 (MTETPTDGGSTPPS) has biased composition (low complexity). Residues 1–24 (MTETPTDGGSTPPSDGGGPGGRIE) form a disordered region. The 470-residue stretch at 49–518 (LPDVRDGLKP…ADGDLSMEDL (470 aa)) folds into the Topo IIA-type catalytic domain. Tyr-137 acts as the O-(5'-phospho-DNA)-tyrosine intermediate in catalysis. The GyrA-box motif lies at 545-551 (QRRGGKG). The segment at 861 to 922 (EANGDDELDE…TEPDPGESDG (62 aa)) is disordered. 2 stretches are compositionally biased toward acidic residues: residues 863–890 (NGDDELDELDESALDEGGAEGGEVDESA) and 912–922 (DTEPDPGESDG).

Belongs to the type II topoisomerase GyrA/ParC subunit family. In terms of assembly, heterotetramer, composed of two GyrA and two GyrB chains. In the heterotetramer, GyrA contains the active site tyrosine that forms a transient covalent intermediate with DNA, while GyrB binds cofactors and catalyzes ATP hydrolysis.

It localises to the cytoplasm. The catalysed reaction is ATP-dependent breakage, passage and rejoining of double-stranded DNA.. Functionally, a type II topoisomerase that negatively supercoils closed circular double-stranded (ds) DNA in an ATP-dependent manner to modulate DNA topology and maintain chromosomes in an underwound state. Negative supercoiling favors strand separation, and DNA replication, transcription, recombination and repair, all of which involve strand separation. Also able to catalyze the interconversion of other topological isomers of dsDNA rings, including catenanes and knotted rings. Type II topoisomerases break and join 2 DNA strands simultaneously in an ATP-dependent manner. The protein is DNA gyrase subunit A of Nocardioides sp. (strain ATCC BAA-499 / JS614).